Here is a 394-residue protein sequence, read N- to C-terminus: Phosphopentomutase (394 aa).

Residues Asp15, Asp288, His293, Asp329, His330, and His341 each contribute to the Mn(2+) site.

This sequence belongs to the phosphopentomutase family. Mn(2+) serves as cofactor.

It is found in the cytoplasm. The catalysed reaction is 2-deoxy-alpha-D-ribose 1-phosphate = 2-deoxy-D-ribose 5-phosphate. It carries out the reaction alpha-D-ribose 1-phosphate = D-ribose 5-phosphate. It functions in the pathway carbohydrate degradation; 2-deoxy-D-ribose 1-phosphate degradation; D-glyceraldehyde 3-phosphate and acetaldehyde from 2-deoxy-alpha-D-ribose 1-phosphate: step 1/2. Functionally, isomerase that catalyzes the conversion of deoxy-ribose 1-phosphate (dRib-1-P) and ribose 1-phosphate (Rib-1-P) to deoxy-ribose 5-phosphate (dRib-5-P) and ribose 5-phosphate (Rib-5-P), respectively. The sequence is that of Phosphopentomutase from Bacillus pumilus (strain SAFR-032).